Consider the following 427-residue polypeptide: 2-oxoglutarate and iron-dependent oxygenase JMJD4 (427 aa).

One can recognise a JmjC domain in the interval 147–306; the sequence is SLVNDLEDIF…NMWHFLQQEL (160 aa). Residues His-194, Asp-196, and His-274 each contribute to the Fe cation site.

This sequence belongs to the JMJD6 family. As to quaternary structure, interacts with ETF1. Interacts with the ETF1-GSPT1 complex. Fe(2+) serves as cofactor.

It is found in the cytoplasm. It carries out the reaction L-lysyl-[protein] + 2-oxoglutarate + O2 = 4-hydroxy-L-lysyl-[protein] + succinate + CO2. Functionally, catalyzes the 2-oxoglutarate and iron-dependent C4-lysyl hydroxylation of ETF1 at 'Lys-63' thereby promoting the translational termination efficiency of ETF1. Not essential for embryonic stem cell (ESC) maintenance and the embryonic and postnatal development. The polypeptide is 2-oxoglutarate and iron-dependent oxygenase JMJD4 (Jmjd4) (Mus musculus (Mouse)).